The sequence spans 303 residues: Probable acetylxylan esterase A (303 aa).

An N-terminal signal peptide occupies residues 1–23; it reads MLSTHLLFLATTLLTSLFHPIAA. Catalysis depends on serine 147, which acts as the Charge relay system. Residue asparagine 189 is glycosylated (N-linked (GlcNAc...) asparagine).

The protein belongs to the carbohydrate esterase 1 (CE1) family. AxeA subfamily. Monomer.

The protein localises to the secreted. It carries out the reaction Deacetylation of xylans and xylo-oligosaccharides.. It functions in the pathway glycan degradation; xylan degradation. Functionally, acetylxylan esterase involved in the hydrolysis of xylan, a major structural heterogeneous polysaccharide found in plant biomass representing the second most abundant polysaccharide in the biosphere, after cellulose. Degrades acetylated xylans by cleaving acetyl side groups from the hetero-xylan backbone. The chain is Probable acetylxylan esterase A (axeA) from Aspergillus niger (strain ATCC MYA-4892 / CBS 513.88 / FGSC A1513).